Reading from the N-terminus, the 61-residue chain is Ferredoxin-2 (61 aa).

2 4Fe-4S ferredoxin-type domains span residues 2–27 and 28–61; these read HRITEECTYCAACEPECPVNAISAGD and EIYIVDESVCTDCEGYYDEPACVAVCPVDCIIKV. [4Fe-4S] cluster-binding residues include Cys-8, Cys-11, Cys-14, Cys-18, Cys-37, Cys-40, Cys-49, and Cys-53.

The cofactor is [4Fe-4S] cluster.

Its function is as follows. Ferredoxins are iron-sulfur proteins that transfer electrons in a wide variety of metabolic reactions. This Chlorobium limicola protein is Ferredoxin-2.